The sequence spans 251 residues: Flap endonuclease Xni (251 aa).

D104 serves as a coordination point for Mg(2+). In terms of domain architecture, 5'-3' exonuclease spans 160 to 249; sequence VLPRQLPDYW…IDGNLQQLRL (90 aa). K(+) is bound by residues L171, A172, P180, V182, and I185. The tract at residues 184 to 189 is interaction with DNA; that stretch reads GIGPKS.

Belongs to the Xni family. The cofactor is Mg(2+). Requires K(+) as cofactor.

Has flap endonuclease activity. During DNA replication, flap endonucleases cleave the 5'-overhanging flap structure that is generated by displacement synthesis when DNA polymerase encounters the 5'-end of a downstream Okazaki fragment. The protein is Flap endonuclease Xni of Salmonella heidelberg (strain SL476).